A 264-amino-acid chain; its full sequence is DNA-directed RNA polymerase subunit Rpo3 (264 aa).

Residues Cys-203, Cys-206, and Cys-209 each contribute to the [3Fe-4S] cluster site.

It belongs to the archaeal Rpo3/eukaryotic RPB3 RNA polymerase subunit family. As to quaternary structure, part of the RNA polymerase complex. [3Fe-4S] cluster is required as a cofactor.

It localises to the cytoplasm. It catalyses the reaction RNA(n) + a ribonucleoside 5'-triphosphate = RNA(n+1) + diphosphate. Its function is as follows. DNA-dependent RNA polymerase (RNAP) catalyzes the transcription of DNA into RNA using the four ribonucleoside triphosphates as substrates. This chain is DNA-directed RNA polymerase subunit Rpo3, found in Archaeoglobus fulgidus (strain ATCC 49558 / DSM 4304 / JCM 9628 / NBRC 100126 / VC-16).